Consider the following 381-residue polypeptide: Sulfite reductase, dissimilatory-type subunit beta (381 aa).

[4Fe-4S] cluster is bound by residues C151, C188, C189, C193, C231, C258, C261, and C264. Residue C193 coordinates siroheme. The 4Fe-4S ferredoxin-type domain occupies 249–276 (NTIAIKNERCMYCGNCYTMCPALPISDG).

In terms of assembly, heterohexamer of two alpha, two beta and two gamma subunits. [4Fe-4S] cluster is required as a cofactor. It depends on siroheme as a cofactor.

The enzyme catalyses [DsrC protein]-trisulfide + NAD(+) + 3 H2O = [DsrC protein]-dithiol + sulfite + NADH + 3 H(+). In terms of biological role, catalyzes the reduction of sulfite to sulfide. This is the terminal oxidation reaction in sulfate respiration, a process catalyzed by the sulfate-reducing bacteria. In Nitratidesulfovibrio vulgaris (strain ATCC 29579 / DSM 644 / CCUG 34227 / NCIMB 8303 / VKM B-1760 / Hildenborough) (Desulfovibrio vulgaris), this protein is Sulfite reductase, dissimilatory-type subunit beta (dsvB).